The sequence spans 571 residues: MRTSNYLLSTLKETPNDAEVVSHKLMLRAGMIRKLASGLYTWLPTGLRVLRKVENIVRQEIDNAGAIETLMPVVQPFELWEETGRSEKMGPELLRFTDRHERPFVLSPTAEEVITALVRNEVSSYKQLPLNLYQIQTKFRDERRPRFGVMRAREFCMMDAYSFDIDKAGLEKSYEAMHVAYCKAFDRMGLDYRPVLADTGAIGGNGSHEFHVLAESGEDLIAFSTESDYAANIEKAEAVAPAIERPAPTQAMTLVDTPNAKTIAELVEQHGLPIEKTVKTLFVKASDEIDAPIVALIIRGDHELNEIKAEKLAEVASPLEMASEEEIRALIGAGPGSLGPVGLKLPFIVDRTVAVMNDFGAGANIDGKHYFGINWGRDVELGKVEDLRNVVEGDPSPCGKGTLMLKRGIEVGHIFQLGTNYSEKMNCGVLDSNGKNVILEMGCYGIGVSRVVAAAIEQNHDDYGIIWPDAIAPFQVAIVPMNMHKSERVQQAAEKLYAELTAAGIEVLFDDRKERPGVMFSDMELIGVPHTIIIGDRSMDEGHFEYKNRRQGEKEAVAMESIIDFIQAKLA.

It belongs to the class-II aminoacyl-tRNA synthetase family. ProS type 1 subfamily. In terms of assembly, homodimer.

The protein localises to the cytoplasm. It carries out the reaction tRNA(Pro) + L-proline + ATP = L-prolyl-tRNA(Pro) + AMP + diphosphate. Its function is as follows. Catalyzes the attachment of proline to tRNA(Pro) in a two-step reaction: proline is first activated by ATP to form Pro-AMP and then transferred to the acceptor end of tRNA(Pro). As ProRS can inadvertently accommodate and process non-cognate amino acids such as alanine and cysteine, to avoid such errors it has two additional distinct editing activities against alanine. One activity is designated as 'pretransfer' editing and involves the tRNA(Pro)-independent hydrolysis of activated Ala-AMP. The other activity is designated 'posttransfer' editing and involves deacylation of mischarged Ala-tRNA(Pro). The misacylated Cys-tRNA(Pro) is not edited by ProRS. This chain is Proline--tRNA ligase, found in Vibrio cholerae serotype O1 (strain ATCC 39541 / Classical Ogawa 395 / O395).